We begin with the raw amino-acid sequence, 318 residues long: MCSGNQTSQNQTASTDFTLTGLFAESKHAALLYTVTFLLFLMALTGNALLILLIHSEPRLHTPMYFFISQLALMDLMYLCVTVPKMLVGQVTGDDTISPSGCGIQMFFYLTLAGAEVFLLAAMAYDRYAAVCRPLHYPLLMNQRVCQLLVSACWVLGMVDGLLLTPITMSFPFCQSRKILSFFCETPALLKLSCSDVSLYKTLMYLCCILMLLAPIMVISSSYTLILHLIHRMNSAAGHRKALATCSSHMIIVLLLFGASFYTYMLPSSYHTAEQDMMVSAFYTIFTPVLNPLIYSLRNKDVTRALRSMMQSRMNQEK.

Topologically, residues 1–30 (MCSGNQTSQNQTASTDFTLTGLFAESKHAA) are extracellular. 2 N-linked (GlcNAc...) asparagine glycosylation sites follow: N5 and N10. A helical transmembrane segment spans residues 31–54 (LLYTVTFLLFLMALTGNALLILLI). Residues 55-62 (HSEPRLHT) are Cytoplasmic-facing. A helical transmembrane segment spans residues 63-84 (PMYFFISQLALMDLMYLCVTVP). Residues 85–105 (KMLVGQVTGDDTISPSGCGIQ) lie on the Extracellular side of the membrane. Cysteines 102 and 194 form a disulfide. Residues 106 to 125 (MFFYLTLAGAEVFLLAAMAY) traverse the membrane as a helical segment. The Cytoplasmic segment spans residues 126–144 (DRYAAVCRPLHYPLLMNQR). The helical transmembrane segment at 145–163 (VCQLLVSACWVLGMVDGLL) threads the bilayer. The Extracellular portion of the chain corresponds to 164-200 (LTPITMSFPFCQSRKILSFFCETPALLKLSCSDVSLY). A helical membrane pass occupies residues 201-224 (KTLMYLCCILMLLAPIMVISSSYT). Topologically, residues 225–241 (LILHLIHRMNSAAGHRK) are cytoplasmic. Residues 242–264 (ALATCSSHMIIVLLLFGASFYTY) form a helical membrane-spanning segment. Topologically, residues 265 to 277 (MLPSSYHTAEQDM) are extracellular. A helical transmembrane segment spans residues 278-297 (MVSAFYTIFTPVLNPLIYSL). Topologically, residues 298–318 (RNKDVTRALRSMMQSRMNQEK) are cytoplasmic.

It belongs to the G-protein coupled receptor 1 family.

Its subcellular location is the cell membrane. In terms of biological role, odorant receptor. In Homo sapiens (Human), this protein is Olfactory receptor 2T3 (OR2T3).